Reading from the N-terminus, the 400-residue chain is Phosphoglycerate kinase (400 aa).

Substrate contacts are provided by residues 24–26, Arg-40, 63–66, Arg-121, and Arg-154; these read DFN and HFGR. Residues Lys-205, Gly-296, Glu-327, and 356-359 each bind ATP; that span reads GGDS.

In terms of assembly, monomer.

The protein resides in the cytoplasm. The enzyme catalyses (2R)-3-phosphoglycerate + ATP = (2R)-3-phospho-glyceroyl phosphate + ADP. The protein operates within carbohydrate degradation; glycolysis; pyruvate from D-glyceraldehyde 3-phosphate: step 2/5. The sequence is that of Phosphoglycerate kinase from Nostoc sp. (strain PCC 7120 / SAG 25.82 / UTEX 2576).